Here is a 105-residue protein sequence, read N- to C-terminus: Large ribosomal subunit protein uL24 (105 aa).

The protein belongs to the universal ribosomal protein uL24 family. Part of the 50S ribosomal subunit.

Functionally, one of two assembly initiator proteins, it binds directly to the 5'-end of the 23S rRNA, where it nucleates assembly of the 50S subunit. In terms of biological role, one of the proteins that surrounds the polypeptide exit tunnel on the outside of the subunit. This is Large ribosomal subunit protein uL24 from Xanthomonas oryzae pv. oryzae (strain PXO99A).